The chain runs to 1464 residues: Collagen alpha-1(III) chain (1464 aa).

The signal sequence occupies residues 1 to 23; it reads MMSFVQSGTWFLLTLLHPTLILA. The propeptide at 24 to 154 is N-terminal propeptide; that stretch reads QQSNVDELGC…CPTGGQNYSP (131 aa). Residues 31 to 90 form the VWFC domain; sequence LGCSHLGQSYESRDVWKPEPCQICVCDSGSVLCDDIICDEEPLDCPNPEIPFGECCAICP. The tract at residues 97 to 1195 is disordered; sequence PVLPDGHGPQ…PGPPGAPGPC (1099 aa). Over residues 100–109 the composition is skewed to low complexity; the sequence is PDGHGPQGPK. Positions 147–156 are enriched in polar residues; the sequence is TGGQNYSPQF. Residues 155 to 169 form a nonhelical region (N-terminal) region; it reads QFDSYDVKSGVGGMG. Positions 164–173 are enriched in gly residues; the sequence is GVGGMGGYPG. Residues 170-1195 form a triple-helical region region; the sequence is GYPGPAGPPG…PGPPGAPGPC (1026 aa). Residues 174 to 184 show a composition bias toward pro residues; that stretch reads PAGPPGPPGPP. The segment covering 186–198 has biased composition (low complexity); it reads SSGHPGSPGSPGY. Residues 228 to 240 are compositionally biased toward basic and acidic residues; sequence KDGESGRPGRPGE. Lysine 262 bears the 5-hydroxylysine; alternate mark. Lysine 262 is a glycosylation site (O-linked (Gal...) hydroxylysine; alternate). Residues 265–276 are compositionally biased toward basic and acidic residues; the sequence is RGFDGRNGEKGE. Lysine 283 carries the post-translational modification 5-hydroxylysine. Low complexity-rich tracts occupy residues 310–321 and 354–379; these read PGLPGAAGARGN and PAGS…AGAQ. Gly residues predominate over residues 389–398; the sequence is GSPGGKGEMG. Positions 399–412 are enriched in low complexity; it reads PAGIPGAPGLIGAR. The span at 527-548 shows a compositional bias: gly residues; it reads GTPGGPGIRGMPGSPGGPGNDG. A compositionally biased stretch (low complexity) spans 606–615; that stretch reads PAGKNGETGP. 2 stretches are compositionally biased toward gly residues: residues 641-650 and 668-677; these read GIPGTGGPPG and GAPGGKGDSG. The span at 678-691 shows a compositional bias: low complexity; the sequence is APGERGPPGTAGIP. The span at 692–708 shows a compositional bias: gly residues; it reads GARGGAGPPGPEGGKGP. The span at 717-727 shows a compositional bias: low complexity; that stretch reads ASGSPGLQGMP. Positions 822 to 834 are enriched in basic and acidic residues; it reads AKGERGAPGEKGE. Residue lysine 859 is modified to 5-hydroxylysine. A compositionally biased stretch (gly residues) spans 863–879; the sequence is GSPGGPGTAGFPGGRGL. Positions 889–906 are enriched in pro residues; the sequence is PGPPGPSGAPGKDGPPGP. Low complexity-rich tracts occupy residues 907 to 934 and 945 to 960; these read AGNS…KGPP and PLGI…LAGP. Position 976 is a 5-hydroxylysine (lysine 976). A compositionally biased stretch (pro residues) spans 1045-1054; that stretch reads PGHPGPPGPV. Over residues 1068 to 1084 the composition is skewed to low complexity; the sequence is PAGPSGAPGPAGARGAP. Residues lysine 1093 and lysine 1105 each carry the 5-hydroxylysine modification. Residues 1120–1132 are compositionally biased toward low complexity; that stretch reads PGAAGHQGAIGSP. The span at 1180–1192 shows a compositional bias: pro residues; the sequence is PGQPGPPGPPGAP. A propeptide spans 1220–1464 (C-terminal propeptide); it reads DDPMDFKINT…GVDIGPVCFL (245 aa). Residues 1230–1464 enclose the Fibrillar collagen NC1 domain; it reads EEIMSSLKSV…GVDIGPVCFL (235 aa). 3 disulfides stabilise this stretch: cysteine 1260/cysteine 1292, cysteine 1300/cysteine 1462, and cysteine 1370/cysteine 1415. 5 residues coordinate Ca(2+): aspartate 1278, asparagine 1280, glutamine 1281, cysteine 1283, and aspartate 1286.

This sequence belongs to the fibrillar collagen family. In terms of assembly, trimers of identical alpha 1(III) chains. The chains are linked to each other by interchain disulfide bonds. Trimers are also cross-linked via hydroxylysines. Interacts with ADGRG1. Post-translationally, proline residues at the third position of the tripeptide repeating unit (G-X-Y) are hydroxylated in some or all of the chains. O-linked glycan consists of a Glc-Gal disaccharide bound to the oxygen atom of a post-translationally added hydroxyl group. As to expression, expressed in embryonic brain, specifically in the meninges, pial basement membrane and blood vessels (at protein level).

The protein resides in the secreted. It is found in the extracellular space. Its subcellular location is the extracellular matrix. In terms of biological role, collagen type III occurs in most soft connective tissues along with type I collagen. Involved in regulation of cortical development. Is the major ligand of ADGRG1 in the developing brain and binding to ADGRG1 inhibits neuronal migration and activates the RhoA pathway by coupling ADGRG1 to GNA13 and possibly GNA12. The polypeptide is Collagen alpha-1(III) chain (Col3a1) (Mus musculus (Mouse)).